The chain runs to 74 residues: Putative defensin-like protein 186 (74 aa).

The signal sequence occupies residues M1–A22. 4 cysteine pairs are disulfide-bonded: C25-C74, C31-C51, C37-C68, and C41-C70.

It belongs to the DEFL family.

It is found in the secreted. The sequence is that of Putative defensin-like protein 186 (LCR40) from Arabidopsis thaliana (Mouse-ear cress).